The following is a 229-amino-acid chain: Large ribosomal subunit protein uL1 (229 aa).

This sequence belongs to the universal ribosomal protein uL1 family. As to quaternary structure, part of the 50S ribosomal subunit.

Binds directly to 23S rRNA. The L1 stalk is quite mobile in the ribosome, and is involved in E site tRNA release. Its function is as follows. Protein L1 is also a translational repressor protein, it controls the translation of the L11 operon by binding to its mRNA. This chain is Large ribosomal subunit protein uL1, found in Clostridium beijerinckii (strain ATCC 51743 / NCIMB 8052) (Clostridium acetobutylicum).